The chain runs to 142 residues: Large ribosomal subunit protein uL11 (142 aa).

This sequence belongs to the universal ribosomal protein uL11 family. Part of the ribosomal stalk of the 50S ribosomal subunit. Interacts with L10 and the large rRNA to form the base of the stalk. L10 forms an elongated spine to which L12 dimers bind in a sequential fashion forming a multimeric L10(L12)X complex. One or more lysine residues are methylated.

Forms part of the ribosomal stalk which helps the ribosome interact with GTP-bound translation factors. This is Large ribosomal subunit protein uL11 from Gamma-proteobacterium EBAC31A08.